Here is a 294-residue protein sequence, read N- to C-terminus: Elongation factor Ts (294 aa).

Residues 79–82 (TDFV) form an involved in Mg(2+) ion dislocation from EF-Tu region.

This sequence belongs to the EF-Ts family.

It localises to the cytoplasm. Associates with the EF-Tu.GDP complex and induces the exchange of GDP to GTP. It remains bound to the aminoacyl-tRNA.EF-Tu.GTP complex up to the GTP hydrolysis stage on the ribosome. This Geobacillus thermodenitrificans (strain NG80-2) protein is Elongation factor Ts.